The following is an 84-amino-acid chain: Cell division topological specificity factor (84 aa).

Belongs to the MinE family.

Its function is as follows. Prevents the cell division inhibition by proteins MinC and MinD at internal division sites while permitting inhibition at polar sites. This ensures cell division at the proper site by restricting the formation of a division septum at the midpoint of the long axis of the cell. The chain is Cell division topological specificity factor from Ectopseudomonas mendocina (strain ymp) (Pseudomonas mendocina).